A 688-amino-acid polypeptide reads, in one-letter code: Lipase (688 aa).

A signal peptide spans Met-1–Ala-35. Residues Gly-31 to Asn-309 are disordered. The propeptide at Ala-36–Ala-302 is removed in mature form. A compositionally biased stretch (polar residues) spans Val-45–Gly-54. A compositionally biased stretch (low complexity) spans Asn-68–Ser-79. Composition is skewed to basic and acidic residues over residues Glu-84–Asp-95 and Ser-103–Ser-143. Residues Glu-144–Ala-172 are compositionally biased toward polar residues. The segment covering Lys-173–Ser-183 has biased composition (basic and acidic residues). Positions Lys-184–Glu-211 are enriched in polar residues. The span at Ser-240 to Ser-267 shows a compositional bias: basic and acidic residues. The segment covering Leu-274–Gln-289 has biased composition (polar residues). The Nucleophile role is filled by Ser-418. The Charge relay system role is filled by Asp-609. Asp-647 is a binding site for Ca(2+). The active-site Charge relay system is the His-648. Ca(2+) contacts are provided by Asp-650, Asp-655, and Asp-658.

This sequence belongs to the AB hydrolase superfamily. Lipase family.

The protein localises to the secreted. The enzyme catalyses a triacylglycerol + H2O = a diacylglycerol + a fatty acid + H(+). The chain is Lipase (lip) from Staphylococcus epidermidis (strain ATCC 12228 / FDA PCI 1200).